The sequence spans 431 residues: C2H2 type master regulator of conidiophore development brlA (431 aa).

Disordered regions lie at residues methionine 29–serine 51, threonine 211–tyrosine 275, and isoleucine 287–asparagine 306. A compositionally biased stretch (low complexity) spans threonine 30–serine 48. The span at proline 225 to methionine 265 shows a compositional bias: polar residues. Residues isoleucine 287–leucine 302 show a composition bias toward basic residues. C2H2-type zinc fingers lie at residues phenylalanine 321 to histidine 345 and histidine 351 to histidine 376. Residues aspartate 390–tyrosine 412 are disordered.

The protein resides in the nucleus. In terms of biological role, brlA, abaA and wetA are pivotal regulators of conidiophore development and conidium maturation. They act individually and together to regulate their own expression and that of numerous other sporulation-specific genes. Binds promoters of target genes at brlA response elements (BREs) containing the conserved sequence 5'-(C/A)(A/G)AGGG(G/A)-3'. Regulates the expression levels of seven secondary metabolism gene clusters including a down-regulated cluster putatively involved in the biosynthesis of the mycotoxins roquefortine C and meleagrin. Negatively regulates the expression of cellulase genes. This is C2H2 type master regulator of conidiophore development brlA from Penicillium oxalicum (strain 114-2 / CGMCC 5302) (Penicillium decumbens).